We begin with the raw amino-acid sequence, 107 residues long: Ferredoxin CarAc (107 aa).

The Rieske domain occupies Leu-6 to Val-102. Cys-46, His-48, Cys-65, and His-68 together coordinate [2Fe-2S] cluster.

As to quaternary structure, monomer. Carbazole 1,9a-dioxygenase complex consists of a terminal oxygenase component CarAa, a ferredoxin reductase component CarAd and a ferredoxin component CarAc. [2Fe-2S] cluster serves as cofactor.

Its function is as follows. Part of the multicomponent carbazole 1,9a-dioxygenase (CARDO), that converts carbazole (CAR) into 2-aminobiphenyl-2,3-diol. Acts as a mediator in the electron transfer from CarAd to CarAa. The sequence is that of Ferredoxin CarAc (carAc) from Metapseudomonas resinovorans (Pseudomonas resinovorans).